Consider the following 495-residue polypeptide: tRNA modification GTPase MnmE (495 aa).

Arg28, Glu89, and Lys128 together coordinate (6S)-5-formyl-5,6,7,8-tetrahydrofolate. One can recognise a TrmE-type G domain in the interval 223–417; sequence GVRIVLGGCP…LRAQTLHLLH (195 aa). Asn233 contributes to the K(+) binding site. GTP is bound by residues 233–238, 252–258, and 277–280; these read NAGKSS, SSVPGTT, and DTAG. Residue Ser237 coordinates Mg(2+). K(+)-binding residues include Ser252, Val254, and Thr257. Residue Thr258 coordinates Mg(2+). Lys495 provides a ligand contact to (6S)-5-formyl-5,6,7,8-tetrahydrofolate.

This sequence belongs to the TRAFAC class TrmE-Era-EngA-EngB-Septin-like GTPase superfamily. TrmE GTPase family. As to quaternary structure, homodimer. Heterotetramer of two MnmE and two MnmG subunits. It depends on K(+) as a cofactor.

The protein resides in the cytoplasm. In terms of biological role, exhibits a very high intrinsic GTPase hydrolysis rate. Involved in the addition of a carboxymethylaminomethyl (cmnm) group at the wobble position (U34) of certain tRNAs, forming tRNA-cmnm(5)s(2)U34. The sequence is that of tRNA modification GTPase MnmE from Treponema pallidum (strain Nichols).